Reading from the N-terminus, the 339-residue chain is DNA-directed RNA polymerase subunit alpha (339 aa).

The tract at residues 1 to 233 (MVREEVAGST…DLFLPFLHAE (233 aa)) is alpha N-terminal domain (alpha-NTD). The interval 264-339 (KKGIPLNCIF…IDLLKNKLSF (76 aa)) is alpha C-terminal domain (alpha-CTD).

It belongs to the RNA polymerase alpha chain family. In terms of assembly, in plastids the minimal PEP RNA polymerase catalytic core is composed of four subunits: alpha, beta, beta', and beta''. When a (nuclear-encoded) sigma factor is associated with the core the holoenzyme is formed, which can initiate transcription.

The protein resides in the plastid. Its subcellular location is the chloroplast. It carries out the reaction RNA(n) + a ribonucleoside 5'-triphosphate = RNA(n+1) + diphosphate. Functionally, DNA-dependent RNA polymerase catalyzes the transcription of DNA into RNA using the four ribonucleoside triphosphates as substrates. This Thinopyrum elongatum (Tall wheatgrass) protein is DNA-directed RNA polymerase subunit alpha.